The primary structure comprises 125 residues: Large ribosomal subunit protein bL21 (125 aa).

A compositionally biased stretch (basic residues) spans 75 to 89; the sequence is FKKRRRQNSKRKRGH. 2 disordered regions span residues 75 to 94 and 103 to 125; these read FKKRRRQNSKRKRGHRQDLT and AGGASPAAAAASSETPAASAPEA. The span at 106–125 shows a compositional bias: low complexity; sequence ASPAAAAASSETPAASAPEA.

This sequence belongs to the bacterial ribosomal protein bL21 family. Part of the 50S ribosomal subunit. Contacts protein L20.

Its function is as follows. This protein binds to 23S rRNA in the presence of protein L20. The sequence is that of Large ribosomal subunit protein bL21 from Methylocella silvestris (strain DSM 15510 / CIP 108128 / LMG 27833 / NCIMB 13906 / BL2).